The following is a 259-amino-acid chain: MSAEAMHAAASAAPKMDPLHHFMVQKVVPIEIAGIDLSITNSTIWMWLAVAVAFLFMKWSFRGRAEDKLIPTKMQSLAEMTFTFVRQIVDQNIGGAEGRKYFPAIFTLFLLVLFCNLLGLIPGSFTPTSQLVVTATLALSVFFFATGLAIVKHGTGFIGFFVPSGVPPMLLILMVPIEIVSYLSRPVSLSVRLFANMTAGHTVLAIMFFFAATLPLGGLLMPAAFATVFTGFELFIGFIQAYIFTILTCVYINDALHLH.

Transmembrane regions (helical) follow at residues 37 to 57 (LSIT…FLFM), 101 to 121 (YFPA…LGLI), 131 to 151 (LVVT…LAIV), 157 to 177 (FIGF…MVPI), 203 to 223 (VLAI…LMPA), and 232 to 252 (FELF…CVYI).

This sequence belongs to the ATPase A chain family. In terms of assembly, F-type ATPases have 2 components, CF(1) - the catalytic core - and CF(0) - the membrane proton channel. CF(1) has five subunits: alpha(3), beta(3), gamma(1), delta(1), epsilon(1). CF(0) has three main subunits: a(1), b(2) and c(9-12). The alpha and beta chains form an alternating ring which encloses part of the gamma chain. CF(1) is attached to CF(0) by a central stalk formed by the gamma and epsilon chains, while a peripheral stalk is formed by the delta and b chains.

It is found in the cell inner membrane. Key component of the proton channel; it plays a direct role in the translocation of protons across the membrane. The sequence is that of ATP synthase subunit a from Magnetococcus marinus (strain ATCC BAA-1437 / JCM 17883 / MC-1).